Reading from the N-terminus, the 257-residue chain is Ribonuclease HII (257 aa).

Residues 72–257 (ERVAGIDEVG…FSPVQKILQA (186 aa)) enclose the RNase H type-2 domain. Residues D78, E79, and D170 each contribute to the a divalent metal cation site.

It belongs to the RNase HII family. Mn(2+) serves as cofactor. Mg(2+) is required as a cofactor.

The protein resides in the cytoplasm. It carries out the reaction Endonucleolytic cleavage to 5'-phosphomonoester.. Its function is as follows. Endonuclease that specifically degrades the RNA of RNA-DNA hybrids. This is Ribonuclease HII from Levilactobacillus brevis (strain ATCC 367 / BCRC 12310 / CIP 105137 / JCM 1170 / LMG 11437 / NCIMB 947 / NCTC 947) (Lactobacillus brevis).